The following is a 137-amino-acid chain: Cucumber peeling cupredoxin (137 aa).

Residue Q1 is modified to Pyrrolidone carboxylic acid. The Phytocyanin domain occupies 3 to 107 (TVHIVGDNTG…GQKLSINVVA (105 aa)). Cu cation is bound by residues H46, C89, H94, and Q99. C60 and C95 are joined by a disulfide. N109 is a glycosylation site (N-linked (GlcNAc...) asparagine). Positions 112–137 (VSMPPPSSSPPSSVMPPPVMPPPSPS) are disordered. The span at 114–137 (MPPPSSSPPSSVMPPPVMPPPSPS) shows a compositional bias: pro residues. P115 bears the 4-hydroxyproline; partial mark. 4-hydroxyproline is present on residues P116, P117, P121, and P122. 4-hydroxyproline; partial is present on P127. 4-hydroxyproline occurs at positions 128, 129, 133, 134, and 136.

In Cucumis sativus (Cucumber), this protein is Cucumber peeling cupredoxin.